Consider the following 126-residue polypeptide: C-type natriuretic peptide (126 aa).

Positions 1–23 are cleaved as a signal peptide; the sequence is MHLSQLLACALLLALLSLRPSEA. The interval 20–71 is disordered; sequence PSEAKPGAPPKVPRTPSGEEVAEPQAAGGGQKKGDKTPGGGGANLKDDRSRL. Positions 24–73 are excised as a propeptide; the sequence is KPGAPPKVPRTPSGEEVAEPQAAGGGQKKGDKTPGGGGANLKDDRSRLLR. The span at 46-62 shows a compositional bias: gly residues; the sequence is AGGGQKKGDKTPGGGGA. The cysteines at positions 110 and 126 are disulfide-linked.

Belongs to the natriuretic peptide family. Post-translationally, degraded by IDE (in vitro).

It is found in the secreted. Hormone which plays a role in endochondral ossification through regulation of cartilaginous growth plate chondrocytes proliferation and differentiation. May also be vasoactive and natriuretic. Acts by specifically binding and stimulating NPR2 to produce cGMP. Binds the clearance receptor NPR3. In Bos taurus (Bovine), this protein is C-type natriuretic peptide (NPPC).